The chain runs to 90 residues: Bombyxin G-1 (90 aa).

An N-terminal signal peptide occupies residues 1–19 (MKLIIFVVFCITIYGSTSG). 3 cysteine pairs are disulfide-bonded: Cys-28–Cys-77, Cys-40–Cys-90, and Cys-76–Cys-81. Residues 49–67 (NTQYEGYHWPLLAYSEERI) constitute a propeptide, c peptide like.

It belongs to the insulin family. Heterodimer of a B chain and an A chain linked by two disulfide bonds.

The protein resides in the secreted. The chain is Bombyxin G-1 (BBXG1) from Bombyx mori (Silk moth).